Reading from the N-terminus, the 595-residue chain is 3-hydroxy-3-methylglutaryl-coenzyme A reductase 2 (595 aa).

Asn35 is a glycosylation site (N-linked (GlcNAc...) asparagine). 2 consecutive transmembrane segments (helical) span residues 48–68 (LPLY…MYFL) and 92–112 (AIVS…IGFV). The linker stretch occupies residues 113-183 (QTFVSRGNND…SPLITPASSE (71 aa)). An N-linked (GlcNAc...) asparagine glycan is attached at Asn121. The tract at residues 184-595 (EDEEIINSVV…KYNRSTKASS (412 aa)) is catalytic. Residue Glu278 is the Charge relay system of the active site. Residue Asn342 is glycosylated (N-linked (GlcNAc...) asparagine). The active-site Charge relay system is Lys410. A glycan (N-linked (GlcNAc...) asparagine) is linked at Asn455. Asp486 functions as the Charge relay system in the catalytic mechanism. The active-site Proton donor is the His584. N-linked (GlcNAc...) asparagine glycosylation is present at Asn588.

It belongs to the HMG-CoA reductase family. Expressed in young flowers and in mature sepals and ovaries.

The protein resides in the endoplasmic reticulum membrane. It carries out the reaction (R)-mevalonate + 2 NADP(+) + CoA = (3S)-3-hydroxy-3-methylglutaryl-CoA + 2 NADPH + 2 H(+). It functions in the pathway metabolic intermediate biosynthesis; (R)-mevalonate biosynthesis; (R)-mevalonate from acetyl-CoA: step 3/3. Functionally, catalyzes the synthesis of mevalonate. The specific precursor of all isoprenoid compounds present in plants. The chain is 3-hydroxy-3-methylglutaryl-coenzyme A reductase 2 (HMG2) from Solanum tuberosum (Potato).